Here is a 183-residue protein sequence, read N- to C-terminus: uncharacterized protein (183 aa).

Disordered stretches follow at residues 1–44 (MPFY…VMTA), 68–137 (GRAG…LGLR), and 163–183 (RDDPRESEVRPVTGVQTVWPE).

This is an uncharacterized protein from Dryophytes versicolor (chameleon treefrog).